Consider the following 158-residue polypeptide: Lipoprotein signal peptidase (158 aa).

3 helical membrane-spanning segments follow: residues 4–24 (KYYITISLIVAIAILIIDQVT), 63–83 (KMGFFYIITIVILIVLVLFYI), and 88–108 (YNLFMQVAISLLFAGALGNFI). Catalysis depends on residues aspartate 118 and aspartate 136. The helical transmembrane segment at 131 to 151 (IFNVADSSLTIGVLFIIIALL) threads the bilayer.

Belongs to the peptidase A8 family.

It localises to the cell membrane. It carries out the reaction Release of signal peptides from bacterial membrane prolipoproteins. Hydrolyzes -Xaa-Yaa-Zaa-|-(S,diacylglyceryl)Cys-, in which Xaa is hydrophobic (preferably Leu), and Yaa (Ala or Ser) and Zaa (Gly or Ala) have small, neutral side chains.. It participates in protein modification; lipoprotein biosynthesis (signal peptide cleavage). Its function is as follows. This protein specifically catalyzes the removal of signal peptides from prolipoproteins. The chain is Lipoprotein signal peptidase from Staphylococcus haemolyticus (strain JCSC1435).